The sequence spans 73 residues: Toxin Td10 (73 aa).

Positions 1–7 (IGMVVEC) are cleaved as a signal peptide. One can recognise an LCN-type CS-alpha/beta domain in the interval 8–70 (KDGYLMGPDG…VWERATNRCG (63 aa)). Disulfide bonds link cysteine 18-cysteine 69, cysteine 22-cysteine 44, cysteine 30-cysteine 50, and cysteine 34-cysteine 52. Lysine 71 carries the post-translational modification Lysine amide.

This sequence belongs to the long (4 C-C) scorpion toxin superfamily. Sodium channel inhibitor family. Beta subfamily. Expressed by the venom gland.

It is found in the secreted. Beta toxins bind voltage-independently at site-4 of sodium channels (Nav) and shift the voltage of activation toward more negative potentials thereby affecting sodium channel activation and promoting spontaneous and repetitive firing. This Tityus discrepans (Venezuelan scorpion) protein is Toxin Td10.